A 368-amino-acid polypeptide reads, in one-letter code: Solute carrier family 35 member G1 (368 aa).

Transmembrane regions (helical) follow at residues 72 to 92 (GLGL…SLFV), 100 to 120 (AVEI…PCLI), 134 to 154 (LFLF…YYAF), 161 to 181 (DATV…WIFL), 190 to 210 (AFFT…PFIF), 225 to 245 (IKGT…LVIL), 256 to 276 (LSIW…LFVI), 289 to 309 (LFLI…TKAV), 316 to 336 (LVAI…IAFF), and 340 to 360 (PTWW…GATI). 2 EamA domains span residues 83–205 (FLFS…LIVR) and 236–360 (VLAA…GATI).

It belongs to the TMEM20 family. Interacts with STIM1; stimulated by depletion of intracellular calcium. Interacts with ORAI1. Interacts with the plasma membrane calcium-transporting ATPases ATP2B1 and ATP2B4. Interacts with ATP1A1, ATP2A2, KPNB1 and XPO1.

Its subcellular location is the cell membrane. It is found in the endoplasmic reticulum membrane. Functionally, may play a role in intracellular calcium sensing and homeostasis. May act as a negative regulator of plasma membrane calcium-transporting ATPases preventing calcium efflux from the cell. This is Solute carrier family 35 member G1 (Slc35g1) from Mus musculus (Mouse).